A 307-amino-acid polypeptide reads, in one-letter code: Dof zinc finger protein DOF5.4 (307 aa).

Residues 51 to 105 (LKCPRCNSLNTKFCYYNNYNLSQPRHFCKNCRRYWTKGGVLRNVPVGGGCRKAKR) form a Dof-type zinc finger. Zn(2+) is bound by residues C53, C56, C78, and C81. A disordered region spans residues 96 to 147 (VGGGCRKAKRSKTKQVPSSSSADKPTTTQDDHHVEEKSSTGSHSSSESSSLT). Residues 109–123 (KQVPSSSSADKPTTT) are compositionally biased toward polar residues. A compositionally biased stretch (basic and acidic residues) spans 124–133 (QDDHHVEEKS). Over residues 134–147 (STGSHSSSESSSLT) the composition is skewed to low complexity.

The protein localises to the nucleus. Transcription factor that binds specifically to a 5'-AA[AG]G-3' consensus core sequence. Enhances the DNA binding of OBF transcription factors to OCS elements. The polypeptide is Dof zinc finger protein DOF5.4 (DOF5.4) (Arabidopsis thaliana (Mouse-ear cress)).